The following is a 250-amino-acid chain: MIDAILGNIIWMALITIGGVLISWSVHFVPVGGAPAAMAQATGIGTGTVQLAAGAGLTGLVSAGFMMNVTDNLPLILASGSVGAMIMIAVTMIVGSIVYVYGVGVVPSSAKVKVDPITKYRQDLYVSQGTEGHGLPTVSYVSGIIGGGLGGIGGSLVYYSLIEVGMSAGLEAVGVTNSVTGHELVAVAAIFAIGIFFVNAVIPSYNIGGTIEGFHDPKFKKWPKAVVSSLVASIMCAIVAVVAIAQLGGI.

The next 6 membrane-spanning stretches (helical) occupy residues 9–29 (IIWM…VHFV), 47–67 (GTVQ…GFMM), 86–106 (IMIA…VGVV), 144–164 (IIGG…LIEV), 184–204 (LVAV…VIPS), and 230–250 (LVAS…LGGI).

It belongs to the MtrD family. In terms of assembly, the complex is composed of 8 subunits; MtrA, MtrB, MtrC, MtrD, MtrE, MtrF, MtrG and MtrH.

It localises to the cell membrane. The catalysed reaction is 5-methyl-5,6,7,8-tetrahydromethanopterin + coenzyme M + 2 Na(+)(in) = 5,6,7,8-tetrahydromethanopterin + methyl-coenzyme M + 2 Na(+)(out). It functions in the pathway one-carbon metabolism; methanogenesis from CO(2); methyl-coenzyme M from 5,10-methylene-5,6,7,8-tetrahydromethanopterin: step 2/2. Functionally, part of a complex that catalyzes the formation of methyl-coenzyme M and tetrahydromethanopterin from coenzyme M and methyl-tetrahydromethanopterin. This is an energy-conserving, sodium-ion translocating step. This Methanosarcina barkeri (strain Fusaro / DSM 804) protein is Tetrahydromethanopterin S-methyltransferase subunit D.